The chain runs to 579 residues: O-fucosyltransferase 24 (579 aa).

Residues 58–78 traverse the membrane as a helical; Signal-anchor for type II membrane protein segment; it reads LWAFSLFLLSILGISLRLGLC. A glycan (N-linked (GlcNAc...) asparagine) is linked at asparagine 133. Position 355 to 357 (355 to 357) interacts with substrate; the sequence is HLR. Asparagine 528, asparagine 573, and asparagine 576 each carry an N-linked (GlcNAc...) asparagine glycan.

Belongs to the glycosyltransferase GT106 family.

The protein localises to the membrane. Its pathway is glycan metabolism. The polypeptide is O-fucosyltransferase 24 (Arabidopsis thaliana (Mouse-ear cress)).